We begin with the raw amino-acid sequence, 245 residues long: MYPVDLHMHTVASTHAYSTLHDYIAEAKLKNIKLFAITDHGPDMADAPHYWHFMNMRVWPRLVDGVGILRGIEANIKNLDGDIDCTGPMLDAVDLLIAGFHEPVFPPQDKAANTQAMIATMAQGNVHIISHPGNPKYPVDIPAIAQAAAKYNVALELNNSSFAHSRKGSEANCRAIAAAVRDAGGWLALGSDSHIAYALGIFEHCERIIAEVNFPQERILNVSPRRLLDYLEQRGRPAIPELAEL.

Positions 7, 9, 15, 40, 73, 101, 131, 192, and 194 each coordinate Zn(2+).

It belongs to the PHP family. In terms of assembly, homotrimer. Zn(2+) serves as cofactor.

This Yersinia pseudotuberculosis serotype I (strain IP32953) protein is Probable phosphatase YPTB2019.